The primary structure comprises 248 residues: 3-deoxy-manno-octulosonate cytidylyltransferase (248 aa).

The protein belongs to the KdsB family.

The protein resides in the cytoplasm. It carries out the reaction 3-deoxy-alpha-D-manno-oct-2-ulosonate + CTP = CMP-3-deoxy-beta-D-manno-octulosonate + diphosphate. It participates in nucleotide-sugar biosynthesis; CMP-3-deoxy-D-manno-octulosonate biosynthesis; CMP-3-deoxy-D-manno-octulosonate from 3-deoxy-D-manno-octulosonate and CTP: step 1/1. The protein operates within bacterial outer membrane biogenesis; lipopolysaccharide biosynthesis. Functionally, activates KDO (a required 8-carbon sugar) for incorporation into bacterial lipopolysaccharide in Gram-negative bacteria. This Shigella boydii serotype 18 (strain CDC 3083-94 / BS512) protein is 3-deoxy-manno-octulosonate cytidylyltransferase.